Consider the following 31-residue polypeptide: Cytochrome b6-f complex subunit 6 (31 aa).

A helical transmembrane segment spans residues 4–26 (ITSYFGFLLAASTITTALFIGLS).

It belongs to the PetL family. In terms of assembly, the 4 large subunits of the cytochrome b6-f complex are cytochrome b6, subunit IV (17 kDa polypeptide, PetD), cytochrome f and the Rieske protein, while the 4 small subunits are PetG, PetL, PetM and PetN. The complex functions as a dimer.

It localises to the plastid. The protein localises to the chloroplast thylakoid membrane. Its function is as follows. Component of the cytochrome b6-f complex, which mediates electron transfer between photosystem II (PSII) and photosystem I (PSI), cyclic electron flow around PSI, and state transitions. PetL is important for photoautotrophic growth as well as for electron transfer efficiency and stability of the cytochrome b6-f complex. The sequence is that of Cytochrome b6-f complex subunit 6 from Acorus calamus (Sweet flag).